A 163-amino-acid chain; its full sequence is Cyanate hydratase (163 aa).

Active-site residues include R103, E106, and S129.

Belongs to the cyanase family.

The enzyme catalyses cyanate + hydrogencarbonate + 3 H(+) = NH4(+) + 2 CO2. Its function is as follows. Catalyzes the reaction of cyanate with bicarbonate to produce ammonia and carbon dioxide. The polypeptide is Cyanate hydratase (Talaromyces marneffei (strain ATCC 18224 / CBS 334.59 / QM 7333) (Penicillium marneffei)).